The chain runs to 338 residues: UPF0324 membrane protein TauZ (338 aa).

A run of 9 helical transmembrane segments spans residues 36–55 (YGAP…NFLA), 75–92 (LGVA…LAAL), 96–118 (AIAL…SRLV), 125–147 (ALLT…AAVL), 162–184 (LSVT…LFGF), 223–245 (LIRV…ARGL), 255–277 (PLLP…GLIP), 290–309 (WALL…GKML), and 314–336 (GAIA…GLHL).

It belongs to the UPF0324 family.

The protein resides in the cell membrane. This is UPF0324 membrane protein TauZ (tauZ) from Paracoccus pantotrophus (Thiosphaera pantotropha).